The chain runs to 408 residues: Myb/SANT-like DNA-binding domain-containing protein 4 (408 aa).

Residues 4–77 enclose the Myb-like domain; it reads LKRKRKSNFS…EVKRRYLDWR (74 aa). Positions 236-367 form a coiled coil; it reads HLLVTLEKQK…IEKERLQDAL (132 aa).

In Xenopus tropicalis (Western clawed frog), this protein is Myb/SANT-like DNA-binding domain-containing protein 4 (msantd4).